A 323-amino-acid chain; its full sequence is Formyl peptide receptor-related sequence 4 (323 aa).

The Extracellular portion of the chain corresponds to 1-29; the sequence is MEVNISMPLNGSEVVFYDSTTSRVLWILS. N-linked (GlcNAc...) asparagine glycosylation is found at Asn4 and Asn10. A helical transmembrane segment spans residues 30–50; it reads LVVLFITFVLGVLGNGLVIWV. Residues 51 to 66 lie on the Cytoplasmic side of the membrane; sequence AGFQMAHTVTTVSYLN. The helical transmembrane segment at 67-87 threads the bilayer; that stretch reads LALSDLSFMATLPLHIISMVM. Over 88–99 the chain is Extracellular; sequence RGKWLFGWFLCK. Cys98 and Cys176 are oxidised to a cystine. Residues 100 to 120 form a helical membrane-spanning segment; that stretch reads LVHIIANINLFVSIFLITLIA. Topologically, residues 121–144 are cytoplasmic; it reads MDRCICVLCPVWSQNHRTVSLARK. Residues 145–165 form a helical membrane-spanning segment; sequence VVLGAWIFALLLTLPHFLFLT. Over 166-202 the chain is Extracellular; the sequence is TVRDARGDVYCISKFESWVATSEEQLKVSVIAATASG. Residues 203-223 traverse the membrane as a helical segment; sequence IINFIIGFSMPMSFIAICYGL. The Cytoplasmic segment spans residues 224–241; it reads MAAKICRRGFVNSSRPLR. A helical transmembrane segment spans residues 242-262; that stretch reads VLTAVAVSFFVCWFPFQLIML. Over 263 to 280 the chain is Extracellular; it reads LGNIFNNETLSIIHMLVN. Asn269 carries an N-linked (GlcNAc...) asparagine glycan. Residues 281 to 301 traverse the membrane as a helical segment; the sequence is PANTLASFNSCLNPILYVFLG. Topologically, residues 302–323 are cytoplasmic; that stretch reads QEFRDRLIYSLYASLERALRED.

The protein belongs to the G-protein coupled receptor 1 family. Expressed in 0.6 % of a subset of sensory neurons located in the apical layer of the vomeronasal organ. Each neuron appears to express only one receptor gene.

It is found in the cell membrane. Its function is as follows. May have an olfactory function associated with the identification of pathogens or of pathogenic states. The sequence is that of Formyl peptide receptor-related sequence 4 (Fpr-rs4) from Mus musculus (Mouse).